The chain runs to 222 residues: Uridine diphosphate glucose pyrophosphatase NUDT14 (222 aa).

One can recognise a Nudix hydrolase domain in the interval 38-206; it reads KTHDSVTVLL…DIPKTLGVIF (169 aa). A Nudix box motif is present at residues 111-129; that stretch reads PGLSLEEVACKEAWEECGY.

It belongs to the Nudix hydrolase family. In terms of assembly, homodimer. Mg(2+) is required as a cofactor.

It is found in the cytoplasm. The enzyme catalyses UDP-sugar + H2O = UMP + alpha-D-aldose 1-phosphate.. Functionally, hydrolyzes UDP-glucose to glucose 1-phosphate and UMP and ADP-ribose to ribose 5-phosphate and AMP. The physiological substrate is probably UDP-glucose. Poor activity on other substrates such as ADP-glucose, CDP-glucose, GDP-glucose and GDP-mannose. The sequence is that of Uridine diphosphate glucose pyrophosphatase NUDT14 (NUDT14) from Homo sapiens (Human).